The chain runs to 34 residues: Egg-releasing peptide (34 aa).

The sequence is that of Egg-releasing peptide from Aplysia californica (California sea hare).